A 440-amino-acid polypeptide reads, in one-letter code: 3-phosphoshikimate 1-carboxyvinyltransferase (440 aa).

3-phosphoshikimate contacts are provided by lysine 19, serine 20, and arginine 24. Residue lysine 19 participates in phosphoenolpyruvate binding. Phosphoenolpyruvate contacts are provided by glycine 92 and arginine 121. Serine 166, glutamine 168, aspartate 315, and lysine 342 together coordinate 3-phosphoshikimate. Phosphoenolpyruvate is bound at residue glutamine 168. Residue aspartate 315 is the Proton acceptor of the active site. Phosphoenolpyruvate is bound by residues arginine 346 and arginine 399.

This sequence belongs to the EPSP synthase family. Monomer.

It localises to the cytoplasm. It carries out the reaction 3-phosphoshikimate + phosphoenolpyruvate = 5-O-(1-carboxyvinyl)-3-phosphoshikimate + phosphate. The protein operates within metabolic intermediate biosynthesis; chorismate biosynthesis; chorismate from D-erythrose 4-phosphate and phosphoenolpyruvate: step 6/7. Functionally, catalyzes the transfer of the enolpyruvyl moiety of phosphoenolpyruvate (PEP) to the 5-hydroxyl of shikimate-3-phosphate (S3P) to produce enolpyruvyl shikimate-3-phosphate and inorganic phosphate. This is 3-phosphoshikimate 1-carboxyvinyltransferase from Leptospira interrogans serogroup Icterohaemorrhagiae serovar Lai (strain 56601).